The following is a 540-amino-acid chain: Glucose-6-phosphate isomerase (540 aa).

The active-site Proton donor is the glutamate 350. Active-site residues include histidine 381 and lysine 503.

It belongs to the GPI family.

It localises to the cytoplasm. The enzyme catalyses alpha-D-glucose 6-phosphate = beta-D-fructose 6-phosphate. The protein operates within carbohydrate biosynthesis; gluconeogenesis. It functions in the pathway carbohydrate degradation; glycolysis; D-glyceraldehyde 3-phosphate and glycerone phosphate from D-glucose: step 2/4. Functionally, catalyzes the reversible isomerization of glucose-6-phosphate to fructose-6-phosphate. The sequence is that of Glucose-6-phosphate isomerase from Burkholderia lata (strain ATCC 17760 / DSM 23089 / LMG 22485 / NCIMB 9086 / R18194 / 383).